The following is a 155-amino-acid chain: Ribosome maturation factor RimP (155 aa).

Belongs to the RimP family.

It is found in the cytoplasm. Required for maturation of 30S ribosomal subunits. The polypeptide is Ribosome maturation factor RimP (Gloeothece citriformis (strain PCC 7424) (Cyanothece sp. (strain PCC 7424))).